Consider the following 910-residue polypeptide: Leucine--tRNA ligase (910 aa).

Residues 42–52 (PYPSGKLHMGH) carry the 'HIGH' region motif. A 'KMSKS' region motif is present at residues 668 to 672 (KMSKS). Lys671 serves as a coordination point for ATP.

This sequence belongs to the class-I aminoacyl-tRNA synthetase family.

Its subcellular location is the cytoplasm. The catalysed reaction is tRNA(Leu) + L-leucine + ATP = L-leucyl-tRNA(Leu) + AMP + diphosphate. The polypeptide is Leucine--tRNA ligase (Neisseria meningitidis serogroup A / serotype 4A (strain DSM 15465 / Z2491)).